The sequence spans 238 residues: Sugar fermentation stimulation protein homolog (238 aa).

It belongs to the SfsA family.

The protein is Sugar fermentation stimulation protein homolog of Alteromonas mediterranea (strain DSM 17117 / CIP 110805 / LMG 28347 / Deep ecotype).